Here is a 358-residue protein sequence, read N- to C-terminus: Homer protein homolog 3 (358 aa).

The segment at M1–W80 is required for interaction with NFATC2. Residues M1–A113 enclose the WH1 domain. Positions S95 to D122 form a coiled coil. Phosphoserine occurs at positions 120 and 158. Disordered stretches follow at residues Q137 to E168 and A239 to D296. The stretch at A190–E355 forms a coiled coil. Over residues L257–E267 the composition is skewed to basic and acidic residues. Over residues I268–G277 the composition is skewed to polar residues. Residues E280–T290 show a composition bias toward basic and acidic residues.

Belongs to the Homer family. In terms of assembly, tetramer. Encodes coiled-coil structures that mediate homo- and heteromultimerization. Interacts with NFATC2; interaction is calcium independent; interaction competes with PPP3CA for NFATC2 binding; interaction is reduced by AKT activation. Interacts with NFATC1 and NFATC4. Interacts with SHANK1; forms a high-order complex at least composed of SHANK1 and HOMER3; the complex formation is regulated by CAMK2A-mediated phosphorylation.

The protein resides in the cytoplasm. It localises to the postsynaptic density. It is found in the synapse. Postsynaptic density scaffolding protein. Binds and cross-links cytoplasmic regions of GRM1, GRM5, ITPR1, DNM3, RYR1, RYR2, SHANK1 and SHANK3. By physically linking GRM1 and GRM5 with ER-associated ITPR1 receptors, it aids the coupling of surface receptors to intracellular calcium release. Negatively regulates T cell activation by inhibiting the calcineurin-NFAT pathway. Acts by competing with calcineurin/PPP3CA for NFAT protein binding, hence preventing NFAT activation by PPP3CA. This chain is Homer protein homolog 3, found in Rattus norvegicus (Rat).